We begin with the raw amino-acid sequence, 243 residues long: Terpene cyclase dpasB (243 aa).

The next 7 helical transmembrane spans lie at 16-36 (VVWV…SNYI), 50-70 (MALM…FIYP), 79-99 (IHTL…RYGA), 112-132 (LPVI…AFAE), 141-161 (AVSG…QLLC), 172-189 (LWLA…PNML), and 207-227 (IWFL…LWYV).

The protein belongs to the paxB family.

It localises to the membrane. It functions in the pathway secondary metabolite biosynthesis; terpenoid biosynthesis. Terpene cyclase; part of the gene cluster that mediates the biosynthesis of the diterpenoid pyrones subglutinols A and B. The first step of the pathway is the synthesis of the alpha-pyrone moiety by the polyketide synthase dpasA via condensation of one acetyl-CoA starter unit with 3 malonyl-CoA units and 2 methylations. The alpha-pyrone is then combined with geranylgeranyl pyrophosphate (GGPP) formed by the GGPP synthase dpasD through the action of the prenyltransferase dpasC to yield a linear alpha-pyrone diterpenoid. Subsequent steps in the diterpenoid pyrone biosynthetic pathway involve the decalin core formation, which is initiated by the epoxidation of the C10-C11 olefin by the FAD-dependent oxidoreductase dpasE, and is followed by a cyclization cascade catalyzed by the terpene cyclase dpasB. The FAD-linked oxidoreductase dpasF is then involved in tetrahydrofuran (THF) ring formation at the C5 unit to complete the formation of subglutinols A and B. DpasF possesses also an additional catalytic ability of multi-step oxidations to generate a new DDP analog with an enone system at the C5 named FDDP A. The chain is Terpene cyclase dpasB from Apiospora sacchari (Arthrinium sacchari).